Consider the following 660-residue polypeptide: Pescadillo homolog (660 aa).

Disordered stretches follow at residues 313–358 (VESD…SYSS) and 471–660 (PELY…EKKA). The span at 331–342 (EEKPSDAIDKFE) shows a compositional bias: basic and acidic residues. In terms of domain architecture, BRCT spans 360–476 (DPAQLFSRLT…ELKSPELYGP (117 aa)). The stretch at 501-659 (LEEQQSEGEA…KRRRLEKEKK (159 aa)) forms a coiled coil. Over residues 504–566 (QQSEGEAIDA…EEGSEDEEES (63 aa)) the composition is skewed to acidic residues. Basic and acidic residues predominate over residues 584 to 619 (VKGDKKMDAKTKAKLEAKKALERKKKSEAEDLERAK).

This sequence belongs to the pescadillo family. Component of the NOP7 complex, composed of ERB1, NOP7 and YTM1. The complex is held together by ERB1, which interacts with NOP7 via its N-terminal domain and with YTM1 via a high-affinity interaction between the seven-bladed beta-propeller domains of the 2 proteins. The NOP7 complex associates with the 66S pre-ribosome.

The protein localises to the nucleus. Its subcellular location is the nucleolus. The protein resides in the nucleoplasm. In terms of biological role, component of the NOP7 complex, which is required for maturation of the 25S and 5.8S ribosomal RNAs and formation of the 60S ribosome. The polypeptide is Pescadillo homolog (Chaetomium globosum (strain ATCC 6205 / CBS 148.51 / DSM 1962 / NBRC 6347 / NRRL 1970) (Soil fungus)).